We begin with the raw amino-acid sequence, 260 residues long: Probable 6-oxopurine nucleoside phosphorylase (260 aa).

Residues Ser-9 and 49–50 each bind phosphate; that span reads RH. A substrate-binding site is contributed by Met-182. A phosphate-binding site is contributed by Thr-183. A substrate-binding site is contributed by 206 to 208; sequence NMA.

The protein belongs to the PNP/MTAP phosphorylase family. MTAP subfamily. Homohexamer. Dimer of a homotrimer.

It carries out the reaction a purine D-ribonucleoside + phosphate = a purine nucleobase + alpha-D-ribose 1-phosphate. It functions in the pathway purine metabolism; purine nucleoside salvage. Its function is as follows. Purine nucleoside phosphorylase which is highly specific for 6-oxopurine nucleosides. Cleaves guanosine or inosine to respective bases and sugar-1-phosphate molecules. Involved in purine salvage. The protein is Probable 6-oxopurine nucleoside phosphorylase of Moorella thermoacetica (strain ATCC 39073 / JCM 9320).